Consider the following 92-residue polypeptide: Protein 10 (92 aa).

Residues 18-29 (FMQKYDKNSDQH) enclose the EF-hand domain.

It belongs to the calbindin family. In terms of tissue distribution, brain.

In Cavia porcellus (Guinea pig), this protein is Protein 10.